The primary structure comprises 337 residues: Glutaminase-asparaginase (337 aa).

Positions 10 to 337 (ANVVILATGG…KELQRIFWEY (328 aa)) constitute an Asparaginase/glutaminase domain. The active-site Acyl-ester intermediate is the Thr20. Substrate contacts are provided by residues Ser67 and 100 to 101 (TD).

It belongs to the asparaginase 1 family. As to quaternary structure, homotetramer.

Its subcellular location is the periplasm. The enzyme catalyses L-glutamine + H2O = L-glutamate + NH4(+). It carries out the reaction L-asparagine + H2O = L-aspartate + NH4(+). The protein is Glutaminase-asparaginase (ansB) of Pseudomonas sp. (strain ATCC 29598 / 7A).